Consider the following 508-residue polypeptide: Kinesin light chain 3 (508 aa).

The disordered stretch occupies residues 1-20 (MSVQVAAPGSTGLGPERLNP). A coiled-coil region spans residues 88 to 150 (LLALSAHVSV…EEEKSHLQFL (63 aa)). The tract at residues 154-197 (RQYDPPEESQRPESPPRRDSLASLFPSEEEEKKGPEAAGAAAAQ) is disordered. Residues 161–173 (ESQRPESPPRRDS) are compositionally biased toward basic and acidic residues. Ser-173 is subject to Phosphoserine. 5 TPR repeats span residues 207 to 240 (LRTL…LERS), 249 to 282 (ATML…REQT), 291 to 324 (AATL…REKV), 333 to 366 (AKQL…YEAL), and 375 to 408 (AKTK…EALP). A disordered region spans residues 409–441 (APLGAPQGGTAGDTQQQVLRRSSSFSKLRESIR). A compositionally biased stretch (polar residues) spans 420 to 434 (GDTQQQVLRRSSSFS). Ser-467 carries the phosphoserine modification. Residues 486–508 (LSTRHLSEAPRTLSISTQDLSPR) form a disordered region. Positions 498–508 (LSISTQDLSPR) are enriched in polar residues. Residue Thr-502 is modified to Phosphothreonine. Ser-506 bears the Phosphoserine mark.

The protein belongs to the kinesin light chain family. Oligomer composed of two heavy chains and two light chains. Associates with microtubulin in an ATP-dependent manner. Interacts with KIF5C. Interacts with ODF1. Interacts with LRGUK. Interacts with VDAC2. In terms of tissue distribution, expressed in postmeiotic male germ cells (at protein level). Expressed in the testes (at protein level). Expressed in spleen, intestine, brain and ovary.

It is found in the cytoplasm. The protein localises to the cytoskeleton. The protein resides in the mitochondrion. Its function is as follows. Kinesin is a microtubule-associated force-producing protein that may play a role in organelle transport. Plays a role during spermiogenesis in the development of the sperm tail midpiece and in the normal function of spermatozoa. May play a role in the formation of the mitochondrial sheath formation in the developing spermatid midpiece. This Mus musculus (Mouse) protein is Kinesin light chain 3 (Klc3).